We begin with the raw amino-acid sequence, 286 residues long: Pyridoxal kinase PdxY (286 aa).

Residues S9 and 44–45 (TQ) each bind substrate. The ATP site is built by D111, E148, and K181. Residue D222 coordinates substrate.

The protein belongs to the pyridoxine kinase family. PdxY subfamily. In terms of assembly, homodimer. Requires Mg(2+) as cofactor.

The catalysed reaction is pyridoxal + ATP = pyridoxal 5'-phosphate + ADP + H(+). Its pathway is cofactor metabolism; pyridoxal 5'-phosphate salvage; pyridoxal 5'-phosphate from pyridoxal: step 1/1. Functionally, pyridoxal kinase involved in the salvage pathway of pyridoxal 5'-phosphate (PLP). Catalyzes the phosphorylation of pyridoxal to PLP. The polypeptide is Pyridoxal kinase PdxY (Actinobacillus pleuropneumoniae serotype 5b (strain L20)).